The following is a 545-amino-acid chain: Adenine deaminase (545 aa).

Belongs to the metallo-dependent hydrolases superfamily. Adenine deaminase family. Mn(2+) serves as cofactor.

It carries out the reaction adenine + H2O + H(+) = hypoxanthine + NH4(+). This Parabacteroides distasonis (strain ATCC 8503 / DSM 20701 / CIP 104284 / JCM 5825 / NCTC 11152) protein is Adenine deaminase.